Reading from the N-terminus, the 83-residue chain is Neurotoxin-1'' (83 aa).

A signal peptide spans Met1 to Ser19. Residues Arg21–Thr82 form the LCN-type CS-alpha/beta domain. Disulfide bonds link Cys31-Cys81, Cys35-Cys53, Cys39-Cys63, and Cys43-Cys65. Position 83 (Arg83) is a propeptide, removed by a carboxypeptidase (in neurotoxin-1/1').

This sequence belongs to the long (4 C-C) scorpion toxin superfamily. Sodium channel inhibitor family. Alpha subfamily. Expressed by the venom gland.

It localises to the secreted. Its function is as follows. Alpha toxins bind voltage-independently at site-3 of sodium channels (Nav) and inhibit the inactivation of the activated channels, thereby blocking neuronal transmission. Is active against mammals and binds with high affinity rat brain synaptosomes. The chain is Neurotoxin-1'' from Androctonus australis (Sahara scorpion).